Here is a 95-residue protein sequence, read N- to C-terminus: Ascorbate-specific PTS system EIIB component (95 aa).

The PTS EIIB type-2 domain maps to Met1–Leu95. Cys12 functions as the Phosphocysteine intermediate in the catalytic mechanism. A Phosphocysteine modification is found at Cys12.

The protein resides in the cytoplasm. The enzyme catalyses N(pros)-phospho-L-histidyl-[protein] + L-ascorbate(out) = L-ascorbate 6-phosphate(in) + L-histidyl-[protein]. Functionally, the phosphoenolpyruvate-dependent sugar phosphotransferase system (sugar PTS), a major carbohydrate active transport system, catalyzes the phosphorylation of incoming sugar substrates concomitantly with their translocation across the cell membrane. The enzyme II UlaABC PTS system is involved in ascorbate transport. The protein is Ascorbate-specific PTS system EIIB component (ulaB) of Mycoplasma pneumoniae (strain ATCC 29342 / M129 / Subtype 1) (Mycoplasmoides pneumoniae).